We begin with the raw amino-acid sequence, 130 residues long: Small ribosomal subunit protein uS13 (130 aa).

The segment covering 97-116 has biased composition (basic residues); sequence PVRGQRTKTNARTRRGKRKT. A disordered region spans residues 97-130; it reads PVRGQRTKTNARTRRGKRKTVGAGKSTSSIKRVK. Polar residues predominate over residues 121–130; sequence KSTSSIKRVK.

It belongs to the universal ribosomal protein uS13 family. As to quaternary structure, part of the 30S ribosomal subunit. Forms a loose heterodimer with protein S19. Forms two bridges to the 50S subunit in the 70S ribosome.

Functionally, located at the top of the head of the 30S subunit, it contacts several helices of the 16S rRNA. In the 70S ribosome it contacts the 23S rRNA (bridge B1a) and protein L5 of the 50S subunit (bridge B1b), connecting the 2 subunits; these bridges are implicated in subunit movement. Contacts the tRNAs in the A and P-sites. In Endomicrobium trichonymphae, this protein is Small ribosomal subunit protein uS13.